The primary structure comprises 407 residues: Putative F-box protein At2g16220 (407 aa).

One can recognise an F-box domain in the interval 1 to 45 (MNSHFLTNDLILEVLSRLPLKSVARFHCVSKRWASMFGSPYFKEL). Residues 385–407 (PPSVQPEYDESDSESEEDREIII) are disordered. Residues 391 to 407 (EYDESDSESEEDREIII) are compositionally biased toward acidic residues.

The polypeptide is Putative F-box protein At2g16220 (Arabidopsis thaliana (Mouse-ear cress)).